We begin with the raw amino-acid sequence, 308 residues long: Tetraspanin-12 (308 aa).

At 1 to 41 (MANRRQPVQHRAQQRVYRQSQIRYAPGAGGESEISCCVKYS) the chain is on the cytoplasmic side. Residues 42–62 (VFSFNVIFFLLGFGLLLFGVW) traverse the membrane as a helical segment. Residues 63-86 (AQIEKNTFVNMLSKASKLYLDPTW) are Extracellular-facing. The helical transmembrane segment at 87–107 (PLLIVGFLTFIIGFSGCVGSL) threads the bilayer. Over 108-112 (RENTS) the chain is Cytoplasmic. Residues 113–133 (FLTFYSTLLGLLLIAEFSAGV) traverse the membrane as a helical segment. Residues 134–268 (FAYACRDQLD…PKLQLWLNNN (135 aa)) lie on the Extracellular side of the membrane. N213 is a glycosylation site (N-linked (GlcNAc...) asparagine). Residues 269–289 (MLLVAVSMVIIAIIQVLGICF) form a helical membrane-spanning segment. Residues 290-308 (AQNLKSDILAQRAKWYYTH) are Cytoplasmic-facing.

This sequence belongs to the tetraspanin (TM4SF) family. In terms of assembly, may interact with protease sup-17; the interaction promotes sup-17 cell membrane localization. In terms of tissue distribution, expressed in the germline.

It localises to the cell membrane. The protein localises to the cytoplasmic vesicle membrane. It is found in the endosome membrane. The protein resides in the early endosome membrane. Its subcellular location is the late endosome membrane. It localises to the recycling endosome membrane. The protein localises to the golgi apparatus. It is found in the trans-Golgi network membrane. In terms of biological role, functions redundantly with tsp-14 isoform a to regulate body size, embryonic and vulva development. Functions redundantly with tsp-14 (isoforms a and b) to regulate cell fate specification in the postembryonic mesodermal M lineage and male development. May regulate BMP-like Sma/Mab signaling by mediating protease sup-17 trafficking to the cell surface. Together with tsp-14, functions redundantly to maintain cell surface levels of the BMP type II receptor daf-4 (but not BMP type I receptor sma-6), probably by regulating endosomal sorting of receptors and their targeting to degradative lysosomes. Together with tsp-14 involved in maintaining the structural and functional integrity of the endosomal network. Together with tsp-14, probably acts by modulating the activation of glp-1, a Notch-like receptor, to regulate germline maturation. Probably acts by modulating the activation of lin-12, a Notch-like receptor, to regulate cell fate specification such as the anchor cell/ventral uterine precursor cell decision. This chain is Tetraspanin-12, found in Caenorhabditis elegans.